The sequence spans 211 residues: FMN-dependent NADH:quinone oxidoreductase 3 (211 aa).

FMN is bound at residue 17-19 (SFS).

It belongs to the azoreductase type 1 family. Homodimer. FMN is required as a cofactor.

The catalysed reaction is 2 a quinone + NADH + H(+) = 2 a 1,4-benzosemiquinone + NAD(+). It catalyses the reaction N,N-dimethyl-1,4-phenylenediamine + anthranilate + 2 NAD(+) = 2-(4-dimethylaminophenyl)diazenylbenzoate + 2 NADH + 2 H(+). Functionally, quinone reductase that provides resistance to thiol-specific stress caused by electrophilic quinones. In terms of biological role, also exhibits azoreductase activity. Catalyzes the reductive cleavage of the azo bond in aromatic azo compounds to the corresponding amines. This chain is FMN-dependent NADH:quinone oxidoreductase 3, found in Halalkalibacterium halodurans (strain ATCC BAA-125 / DSM 18197 / FERM 7344 / JCM 9153 / C-125) (Bacillus halodurans).